We begin with the raw amino-acid sequence, 286 residues long: MDAAAELTLLEACWRTVVLGIVQGLTEFLPISSTAHLKVVPVLAGWGDPGVAVTAVIQLGSIAAVIGYFRSDLLQVCRGLARALREGDWGSPDARLGIAIAVGTLPVVVAGLLIKLFWPGYETSPLRSVASIGIVSIVMALLLALAERLGQRRKQLPSVQGLDGVVVGLAQALAIIPGVSRSGSTLTASLLFGWQRSDAARFSFLLGIPAITLAGLVELKGAFAEGSVYGPLPMLLGILSAAVVSWLAIAWLLKFLQTNSTWPFVIYRLVFGVVLLALVLANPTLG.

Transmembrane regions (helical) follow at residues 17–37 (VVLG…TAHL), 49–69 (PGVA…IGYF), 98–118 (IAIA…KLFW), 126–146 (LRSV…LALA), 159–179 (VQGL…IPGV), 204–224 (FLLG…GAFA), 232–252 (LPML…IAWL), and 261–281 (TWPF…LVLA).

The protein belongs to the UppP family.

It localises to the cell inner membrane. It carries out the reaction di-trans,octa-cis-undecaprenyl diphosphate + H2O = di-trans,octa-cis-undecaprenyl phosphate + phosphate + H(+). Its function is as follows. Catalyzes the dephosphorylation of undecaprenyl diphosphate (UPP). Confers resistance to bacitracin. This chain is Undecaprenyl-diphosphatase, found in Synechococcus sp. (strain RCC307).